We begin with the raw amino-acid sequence, 280 residues long: Lipase chaperone (280 aa).

Residues alanine 5 to leucine 22 form a helical membrane-spanning segment.

The protein belongs to the lipase chaperone family.

It is found in the cell inner membrane. Its function is as follows. May be involved in the folding of the extracellular lipase during its passage through the periplasm. The chain is Lipase chaperone (lifO) from Vibrio vulnificus (strain YJ016).